A 367-amino-acid chain; its full sequence is Pre-small/secreted glycoprotein (367 aa).

Residues 1-33 (MGSGYQLLQLPRERFRKTSFLVWVIILFQRAIS) form the signal peptide. N-linked (GlcNAc...) asparagine; by host glycosylation occurs at N41. Disulfide bonds link C109-C136 and C122-C148. N-linked (GlcNAc...) asparagine; by host glycans are attached at residues N205, N229, N239, N258, and N269.

It belongs to the filoviruses glycoprotein family. Homodimer; disulfide-linked. The homodimers are linked by two disulfide bonds in a parallel orientation. As to quaternary structure, monomer. In terms of processing, this precursor is processed into mature sGP and delta-peptide by host furin or furin-like proteases. The cleavage site corresponds to the furin optimal cleavage sequence [KR]-X-[KR]-R. N-glycosylated. Post-translationally, O-glycosylated.

It is found in the secreted. Functionally, seems to possess an anti-inflammatory activity as it can reverse the barrier-decreasing effects of TNF alpha. Might therefore contribute to the lack of inflammatory reaction seen during infection in spite the of extensive necrosis and massive virus production. Does not seem to be involved in activation of primary macrophages. Does not seem to interact specifically with neutrophils. Its function is as follows. Viroporin that permeabilizes mammalian cell plasma membranes. It acts by altering permeation of ionic compounds and small molecules. This activity may lead to viral enterotoxic activity. In Epomops franqueti (Franquet's epauletted fruit bat), this protein is Pre-small/secreted glycoprotein (GP).